Here is a 343-residue protein sequence, read N- to C-terminus: MKFLDEAKVYVRSGDGGAGCVSFRREKFIEFGGPDGGDGGRGGDVWAECVEGLNTLIDYRYQQHFKAKKGEHGSGRNRAGAKGGDVVLKVPAGTQILAEDRETLVADLTRVGQRVLLARGGNGGFGNAYFTTSTNRAPRHANPGQEGQEHWLWLRLKLIADAGLVGLPNAGKSTFLATVTAAKPKIADYPFTTLHPGLGVVRVDTREFVLADIPGLIEGAHEGVGLGDRFLAHVERCRVLLHLVEGTSEDAGAAYRLVRAELEAYGHGLADKPEIVALSKADILDPERLEAQVASLEAACGRRPLVISAATRRGVPEALRALLAAMDRAQAEAAPEKAEAWQP.

The Obg domain occupies 1–159 (MKFLDEAKVY…HWLWLRLKLI (159 aa)). Residues 160–327 (ADAGLVGLPN…ALRALLAAMD (168 aa)) enclose the OBG-type G domain. Residues 166-173 (GLPNAGKS), 191-195 (FTTLH), 212-215 (DIPG), 279-282 (SKAD), and 308-310 (SAA) contribute to the GTP site. The Mg(2+) site is built by S173 and T193.

It belongs to the TRAFAC class OBG-HflX-like GTPase superfamily. OBG GTPase family. In terms of assembly, monomer. The cofactor is Mg(2+).

It localises to the cytoplasm. Its function is as follows. An essential GTPase which binds GTP, GDP and possibly (p)ppGpp with moderate affinity, with high nucleotide exchange rates and a fairly low GTP hydrolysis rate. Plays a role in control of the cell cycle, stress response, ribosome biogenesis and in those bacteria that undergo differentiation, in morphogenesis control. The polypeptide is GTPase Obg (Methylobacterium sp. (strain 4-46)).